The primary structure comprises 356 residues: DNA polymerase IV (356 aa).

Residues 6–187 (IIHVDMDYFF…LDIGDFPGVG (182 aa)) enclose the UmuC domain. Mg(2+)-binding residues include aspartate 10 and aspartate 105. Glutamate 106 is an active-site residue.

Belongs to the DNA polymerase type-Y family. Monomer. Mg(2+) is required as a cofactor.

The protein localises to the cytoplasm. It catalyses the reaction DNA(n) + a 2'-deoxyribonucleoside 5'-triphosphate = DNA(n+1) + diphosphate. Its function is as follows. Poorly processive, error-prone DNA polymerase involved in untargeted mutagenesis. Copies undamaged DNA at stalled replication forks, which arise in vivo from mismatched or misaligned primer ends. These misaligned primers can be extended by PolIV. Exhibits no 3'-5' exonuclease (proofreading) activity. May be involved in translesional synthesis, in conjunction with the beta clamp from PolIII. The chain is DNA polymerase IV from Staphylococcus saprophyticus subsp. saprophyticus (strain ATCC 15305 / DSM 20229 / NCIMB 8711 / NCTC 7292 / S-41).